A 387-amino-acid chain; its full sequence is Patatin-03 (387 aa).

The N-terminal stretch at 1-23 (MATTKSVLVLIFMILATTSSTFA) is a signal peptide. One can recognise a PNPLA domain in the interval 32-230 (LSIDGGGIKG…TVADPALLSV (199 aa)). Residues 36–41 (GGGIKG) carry the GXGXXG motif. The GXSXG signature appears at 75–79 (GTSTG). Ser77 (nucleophile) is an active-site residue. N-linked (GlcNAc...) asparagine glycosylation is found at Asn115 and Asn203. Asp216 functions as the Proton acceptor in the catalytic mechanism. Residues 216-218 (DGA) carry the DGA/G motif.

It belongs to the patatin family. As to expression, tuber.

The protein localises to the vacuole. In terms of biological role, probable lipolytic acyl hydrolase (LAH), an activity which is thought to be involved in the response of tubers to pathogens. This Solanum tuberosum (Potato) protein is Patatin-03.